We begin with the raw amino-acid sequence, 394 residues long: Probable 6-phosphogluconolactonase ARB_02015 (394 aa).

Positions Met-1–Ala-21 are cleaved as a signal peptide. An N-linked (GlcNAc...) asparagine glycan is attached at Asn-51.

This sequence belongs to the cycloisomerase 2 family.

The protein resides in the secreted. It catalyses the reaction 6-phospho-D-glucono-1,5-lactone + H2O = 6-phospho-D-gluconate + H(+). It functions in the pathway carbohydrate degradation; pentose phosphate pathway; D-ribulose 5-phosphate from D-glucose 6-phosphate (oxidative stage): step 2/3. Its function is as follows. Catalyzes the hydrolysis of 6-phosphogluconolactone to 6-phosphogluconate. In Arthroderma benhamiae (strain ATCC MYA-4681 / CBS 112371) (Trichophyton mentagrophytes), this protein is Probable 6-phosphogluconolactonase ARB_02015.